The following is a 58-amino-acid chain: Small ribosomal subunit protein bS21 (58 aa).

It belongs to the bacterial ribosomal protein bS21 family.

The sequence is that of Small ribosomal subunit protein bS21 from Picosynechococcus sp. (strain ATCC 27264 / PCC 7002 / PR-6) (Agmenellum quadruplicatum).